The following is a 148-amino-acid chain: UPF0179 protein Mpal_0949 (148 aa).

The protein belongs to the UPF0179 family.

This chain is UPF0179 protein Mpal_0949, found in Methanosphaerula palustris (strain ATCC BAA-1556 / DSM 19958 / E1-9c).